The primary structure comprises 177 residues: Large ribosomal subunit protein uL6 (177 aa).

This sequence belongs to the universal ribosomal protein uL6 family. Part of the 50S ribosomal subunit.

In terms of biological role, this protein binds to the 23S rRNA, and is important in its secondary structure. It is located near the subunit interface in the base of the L7/L12 stalk, and near the tRNA binding site of the peptidyltransferase center. This chain is Large ribosomal subunit protein uL6, found in Histophilus somni (strain 2336) (Haemophilus somnus).